Consider the following 340-residue polypeptide: Mitotic checkpoint protein BUB3.1 (340 aa).

Residues 1-20 are disordered; that stretch reads MTTVTPSAGRELSNPPSDGI. 5 WD repeats span residues 15-54, 96-135, 142-179, 239-278, and 281-324; these read PPSD…LKGE, THDK…GPER, LQPE…QPEQ, DIVY…RLYQ, and KYPT…RSVN.

Belongs to the WD repeat BUB3 family. Part of the mitotic checkpoint complex (MCC); interacts with CDC20-1 and CDC20-2. Interacts with MAD2 and BUBR1. In terms of tissue distribution, expressed in actively dividing tissues, early in organ development, in young leaves, lateral root primordia and root meristems, flower buds, flowers and siliques.

Its subcellular location is the nucleus. It localises to the chromosome. It is found in the centromere. The protein resides in the kinetochore. The protein localises to the cytoplasm. Its subcellular location is the cytoskeleton. It localises to the phragmoplast. It is found in the spindle. Functionally, has a dual function in spindle-assembly checkpoint signaling and in promoting the establishment of correct kinetochore-microtubule (K-MT) attachments. Promotes the formation of stable end-on bipolar attachments. Necessary for kinetochore localization of BUB1. The BUB1/BUB3 complex plays a role in the inhibition of anaphase-promoting complex or cyclosome (APC/C) when spindle-assembly checkpoint is activated and inhibits the ubiquitin ligase activity of APC/C by phosphorylating its activator CDC20. Essential for gametophyte development. This is Mitotic checkpoint protein BUB3.1 (BUB3.1) from Arabidopsis thaliana (Mouse-ear cress).